A 162-amino-acid chain; its full sequence is Crossover junction endodeoxyribonuclease RuvC (162 aa).

Catalysis depends on residues Asp7, Glu67, and Asp140. Residues Asp7, Glu67, and Asp140 each coordinate Mg(2+).

The protein belongs to the RuvC family. In terms of assembly, homodimer which binds Holliday junction (HJ) DNA. The HJ becomes 2-fold symmetrical on binding to RuvC with unstacked arms; it has a different conformation from HJ DNA in complex with RuvA. In the full resolvosome a probable DNA-RuvA(4)-RuvB(12)-RuvC(2) complex forms which resolves the HJ. It depends on Mg(2+) as a cofactor.

It localises to the cytoplasm. The catalysed reaction is Endonucleolytic cleavage at a junction such as a reciprocal single-stranded crossover between two homologous DNA duplexes (Holliday junction).. Its function is as follows. The RuvA-RuvB-RuvC complex processes Holliday junction (HJ) DNA during genetic recombination and DNA repair. Endonuclease that resolves HJ intermediates. Cleaves cruciform DNA by making single-stranded nicks across the HJ at symmetrical positions within the homologous arms, yielding a 5'-phosphate and a 3'-hydroxyl group; requires a central core of homology in the junction. The consensus cleavage sequence is 5'-(A/T)TT(C/G)-3'. Cleavage occurs on the 3'-side of the TT dinucleotide at the point of strand exchange. HJ branch migration catalyzed by RuvA-RuvB allows RuvC to scan DNA until it finds its consensus sequence, where it cleaves and resolves the cruciform DNA. This chain is Crossover junction endodeoxyribonuclease RuvC, found in Heliobacterium modesticaldum (strain ATCC 51547 / Ice1).